The following is a 150-amino-acid chain: uncharacterized protein (150 aa).

Tandem repeats lie at residues 101–105 (FHEVN), 106–110 (HHEVN), 111–115 (HHKIN), 116–120 (HHEVN), and 121–125 (HHKIN). The segment at 101–125 (FHEVNHHEVNHHKINHHEVNHHKIN) is 5 X 5 AA tandem repeats of [FH]-H-[EK]-[IV]-N.

This sequence belongs to the asfivirus D129L family.

This is an uncharacterized protein from African swine fever virus (isolate Tick/Malawi/Lil 20-1/1983) (ASFV).